A 230-amino-acid polypeptide reads, in one-letter code: UPF0758 protein plu4865 (230 aa).

The MPN domain occupies 108-230; sequence IMSSPSVTQE…CVSFAERGWI (123 aa). 3 residues coordinate Zn(2+): His179, His181, and Asp192. The short motif at 179–192 is the JAMM motif element; the sequence is HNHPSGHAEPSLAD.

It belongs to the UPF0758 family. YicR subfamily.

The protein is UPF0758 protein plu4865 of Photorhabdus laumondii subsp. laumondii (strain DSM 15139 / CIP 105565 / TT01) (Photorhabdus luminescens subsp. laumondii).